A 249-amino-acid polypeptide reads, in one-letter code: Adenylate kinase (249 aa).

Position 43–48 (43–48 (GAGKGT)) interacts with ATP. Residues 63–92 (ATGDMLRAQVAAKSALGVEAKKIMDQGGLV) form an NMP region. AMP-binding positions include Thr-64, Arg-69, 90–92 (GLV), 119–122 (GFPR), and Gln-126. The interval 160 to 197 (GRLVHPASGRSYHKLFNPPKKDMIDDVSGDALVQRSDD) is LID. ATP-binding positions include Arg-161 and 170–171 (SY). AMP-binding residues include Arg-194 and Arg-205. Residue Gln-233 coordinates ATP.

The protein belongs to the adenylate kinase family. AK2 subfamily. As to quaternary structure, monomer.

The protein resides in the cytoplasm. Its subcellular location is the cytosol. It is found in the mitochondrion intermembrane space. The enzyme catalyses AMP + ATP = 2 ADP. Its function is as follows. Catalyzes the reversible transfer of the terminal phosphate group between ATP and AMP. Plays an important role in cellular energy homeostasis and in adenine nucleotide metabolism. Adenylate kinase activity is critical for regulation of the phosphate utilization and the AMP de novo biosynthesis pathways. This is Adenylate kinase from Debaryomyces hansenii (strain ATCC 36239 / CBS 767 / BCRC 21394 / JCM 1990 / NBRC 0083 / IGC 2968) (Yeast).